The sequence spans 96 residues: Guanyl-specific ribonuclease Sa (96 aa).

Cys-7 and Cys-96 form a disulfide bridge. Catalysis depends on Glu-54, which acts as the Proton acceptor. The active-site Proton donor is the His-85.

It belongs to the ribonuclease N1/T1 family.

It is found in the secreted. The enzyme catalyses [RNA] containing guanosine + H2O = an [RNA fragment]-3'-guanosine-3'-phosphate + a 5'-hydroxy-ribonucleotide-3'-[RNA fragment].. The protein is Guanyl-specific ribonuclease Sa (rnaSA) of Kitasatospora aureofaciens (Streptomyces aureofaciens).